The chain runs to 439 residues: Rho GTPase-activating protein 1 (439 aa).

Methionine 1 bears the N-acetylmethionine mark. The span at 28–48 shows a compositional bias: basic and acidic residues; sequence IDEKNWPSDEMPDFPKSDDSK. The interval 28–55 is disordered; it reads IDEKNWPSDEMPDFPKSDDSKSSSPEPV. Residues serine 44, serine 47, serine 50, and serine 51 each carry the phosphoserine modification. The CRAL-TRIO domain occupies 63 to 218; the sequence is PYYDIARHQI…QVLKYDDFLK (156 aa). Tyrosine 65 is modified (phosphotyrosine). Position 80 is an N6-acetyllysine (lysine 80). Positions 228-238 match the SH3-binding motif; it reads PKPMPPRPPLP. The region spanning 244–431 is the Rho-GAP domain; the sequence is VSLQHLQEKS…FLLDHQGELF (188 aa).

As to quaternary structure, found in a complex with XPO7, EIF4A1, ARHGAP1, VPS26A, VPS29, VPS35 and SFN. Interacts with BNIPL.

It localises to the cytoplasm. Functionally, GTPase activator for the Rho, Rac and Cdc42 proteins, converting them to the putatively inactive GDP-bound state. Cdc42 seems to be the preferred substrate. The chain is Rho GTPase-activating protein 1 (Arhgap1) from Mus musculus (Mouse).